A 102-amino-acid polypeptide reads, in one-letter code: MTISIMGNNVTPIQPNESVNQVKRSPSEAQANFASTLKNAIEDLNHIQLESDKKTEAFASGKIDDLHDVMITAQKSSVTLETTVQVQKKVIDAYNEIMRMQV.

It belongs to the FliE family.

Its subcellular location is the bacterial flagellum basal body. This Oceanobacillus iheyensis (strain DSM 14371 / CIP 107618 / JCM 11309 / KCTC 3954 / HTE831) protein is Flagellar hook-basal body complex protein FliE.